The following is a 325-amino-acid chain: ATPase ASNA1 homolog 2 (325 aa).

22 to 29 (KGGVGKTT) lines the ATP pocket. Residue Asp-51 is part of the active site. ATP is bound by residues Glu-231 and Asn-258. Zn(2+)-binding residues include Cys-267 and Cys-270.

Belongs to the arsA ATPase family. In terms of assembly, homodimer.

It is found in the cytoplasm. Its subcellular location is the endoplasmic reticulum. In terms of biological role, ATPase required for the post-translational delivery of tail-anchored (TA) proteins to the endoplasmic reticulum. Recognizes and selectively binds the transmembrane domain of TA proteins in the cytosol. This complex then targets to the endoplasmic reticulum by membrane-bound receptors, where the tail-anchored protein is released for insertion. This process is regulated by ATP binding and hydrolysis. ATP binding drives the homodimer towards the closed dimer state, facilitating recognition of newly synthesized TA membrane proteins. ATP hydrolysis is required for insertion. Subsequently, the homodimer reverts towards the open dimer state, lowering its affinity for the membrane-bound receptor, and returning it to the cytosol to initiate a new round of targeting. The protein is ATPase ASNA1 homolog 2 of Paramecium tetraurelia.